The primary structure comprises 42 residues: MALRRALPGWTQDDSYRIRRSGRAERGVRAHSPAWSERPTPN.

The tract at residues 20–42 is disordered; that stretch reads RSGRAERGVRAHSPAWSERPTPN.

This is an uncharacterized protein from Escherichia coli.